The chain runs to 217 residues: Frizzled-8 (217 aa).

Over 1-26 (AGAAELQPELAVAEHVRYESTGPALC) the chain is Extracellular. Residues 27–47 (TVVFLLVYFFGMASSIWWVIL) form a helical membrane-spanning segment. At 48-69 (SLTWFLAAGMKWGNEAIAGYAQ) the chain is on the cytoplasmic side. A helical membrane pass occupies residues 70–90 (YFHLAAWLLPSVKSIAVLALS). Residues 91–113 (SVDGDPVAGICYVGNQSLENLRG) are Extracellular-facing. The N-linked (GlcNAc...) asparagine glycan is linked to Asn105. A helical transmembrane segment spans residues 114 to 134 (FVLAPLVVYLFTGSLFLLAGF). Residues 135–160 (VSLFRIRSVIKQGGTKTDKLEKLMIR) lie on the Cytoplasmic side of the membrane. The chain crosses the membrane as a helical span at residues 161–181 (IGIFTVLYTVPATIVIACYIY). At 182 to 209 (EQHNREAWEQAQNCSCPGDPHRPKPDYA) the chain is on the extracellular side. An N-linked (GlcNAc...) asparagine glycan is attached at Asn194. The helical transmembrane segment at 210 to 217 (VFMLKYFM) threads the bilayer.

The protein belongs to the G-protein coupled receptor Fz/Smo family.

The protein resides in the membrane. It is found in the cell membrane. In terms of biological role, receptor for Wnt proteins. Most of frizzled receptors are coupled to the beta-catenin canonical signaling pathway, which leads to the activation of disheveled proteins, inhibition of GSK-3 kinase, nuclear accumulation of beta-catenin and activation of Wnt target genes. A second signaling pathway involving PKC and calcium fluxes has been seen for some family members, but it is not yet clear if it represents a distinct pathway or if it can be integrated in the canonical pathway, as PKC seems to be required for Wnt-mediated inactivation of GSK-3 kinase. Both pathways seem to involve interactions with G-proteins. May be involved in transduction and intercellular transmission of polarity information during tissue morphogenesis and/or in differentiated tissues. The polypeptide is Frizzled-8 (FZD8) (Gallus gallus (Chicken)).